The following is a 421-amino-acid chain: Subtilisin-like protease 2 (421 aa).

Residues 1–16 form the signal peptide; the sequence is MQLLNFGLLLLPFVAG. Positions 17–122 are excised as a propeptide; that stretch reads DLAPQPEPLL…VHPDQHFYLA (106 aa). In terms of domain architecture, Inhibitor I9 spans 36 to 121; that stretch reads QYLVTLKEGL…SVHPDQHFYL (86 aa). In terms of domain architecture, Peptidase S8 spans 131-421; the sequence is RWGLGYMSSK…ERKCKLPKYY (291 aa). The active-site Charge relay system is the D169. A glycan (N-linked (GlcNAc...) asparagine) is linked at N192. H201 functions as the Charge relay system in the catalytic mechanism. Residues N248, N261, and N348 are each glycosylated (N-linked (GlcNAc...) asparagine). The Charge relay system role is filled by S357. An N-linked (GlcNAc...) asparagine glycan is attached at N388.

This sequence belongs to the peptidase S8 family.

The protein resides in the secreted. Secreted subtilisin-like serine protease with keratinolytic activity that contributes to pathogenicity. This is Subtilisin-like protease 2 (SUB2) from Trichophyton rubrum (Athlete's foot fungus).